Consider the following 227-residue polypeptide: Ureidoacrylate amidohydrolase RutB (227 aa).

Residue aspartate 22 is the Proton acceptor of the active site. The active site involves lysine 131. Cysteine 164 acts as the Nucleophile in catalysis.

The protein belongs to the isochorismatase family. RutB subfamily.

It catalyses the reaction (Z)-3-ureidoacrylate + H2O + H(+) = (Z)-3-aminoacrylate + NH4(+) + CO2. The catalysed reaction is (Z)-3-ureidoacrylate + H2O = (Z)-3-aminoacrylate + carbamate + H(+). The enzyme catalyses (Z)-2-methylureidoacrylate + H2O + H(+) = (Z)-2-methylaminoacrylate + NH4(+) + CO2. Hydrolyzes ureidoacrylate to form aminoacrylate and carbamate. The carbamate hydrolyzes spontaneously, thereby releasing one of the nitrogen atoms of the pyrimidine ring as ammonia and one of its carbon atoms as CO2. In Azorhizobium caulinodans (strain ATCC 43989 / DSM 5975 / JCM 20966 / LMG 6465 / NBRC 14845 / NCIMB 13405 / ORS 571), this protein is Ureidoacrylate amidohydrolase RutB.